The following is a 296-amino-acid chain: Glycine--tRNA ligase alpha subunit (296 aa).

Belongs to the class-II aminoacyl-tRNA synthetase family. Tetramer of two alpha and two beta subunits.

It localises to the cytoplasm. The enzyme catalyses tRNA(Gly) + glycine + ATP = glycyl-tRNA(Gly) + AMP + diphosphate. This Polynucleobacter necessarius subsp. necessarius (strain STIR1) protein is Glycine--tRNA ligase alpha subunit.